Consider the following 93-residue polypeptide: UPF0728 protein C10orf53 homolog (93 aa).

This sequence belongs to the UPF0728 family.

This is UPF0728 protein C10orf53 homolog from Bos taurus (Bovine).